The sequence spans 642 residues: MPCGEDWLSHPLGIVQGFFAQNGVNPDWEKKVIEYFKEKLKENNAPKWVPSLNEVPLHYLKPNSFVKFRCMIQDMFDPEFYMGVYETVNQNTKAHVLHFGKYRDVAECGPQQELDLNSPRNTTLERQTFYCVPVPGESTWVKEAYVNANQARVSPSTSYTPSRHKRSYEDDDDMDLQPNKQKDQHAGARQAGSVGGLQWCGEPKRLETEASTGQQLNSLNLSSPFDLNFPLPGEKGPACLVKVYEDWDCFKVNDILELYGILSVDPVLSILNNDERDASALLDPMECTDTAEEQRVHSPPASLVPRIHVILAQKLQHINPLLPACLNKEESKTCKFVSSFMSELSPVRAELLGFLTHALLGDSLAAEYLILHLISTVYTRRDVLPLGKFTVNLSGCPRNSTFTEHLYRIIQHLVPASFRLQMTIENMNHLKFIPHKDYTANRLVSGLLQLPSNTSLVIDETLLEQGQLDTPGVHNVTALSNLITWQKVDYDFSYHQMEFPCNINVFITSEGRSLLPADCQIHLQPQLIPPNMEEYMNSLLSAVLPSVLNKFRIYLTLLRFLEYSISDEITKAVEDDFVEMRKNDPQSITADDLHQLLVVARCLSLSAGQTTLSRERWLRAKQLESLRRTRLQQQKCVNGNEL.

Polar residues predominate over residues alanine 151–proline 161. The segment at alanine 151–leucine 197 is disordered. The residue at position 154 (serine 154) is a Phosphoserine. Position 160 is a phosphothreonine (threonine 160). Serine 167 and serine 298 each carry phosphoserine.

It belongs to the MCMBP family. As to quaternary structure, interacts with the MCM complex: associates with the MCM3-7 complex which lacks MCM2, while it does not interact with the MCM complex when MCM2 is present (MCM2-7 complex). Interacts with the RPA complex, when composed of all RPA1, RPA2 and RPA3 components, but not with RPA1 or RPA2 alone.

It is found in the nucleus. Associated component of the MCM complex that acts as a regulator of DNA replication. Binds to the MCM complex during late S phase and promotes the disassembly of the MCM complex from chromatin, thereby acting as a key regulator of pre-replication complex (pre-RC) unloading from replicated DNA. Can dissociate the MCM complex without addition of ATP; probably acts by destabilizing interactions of each individual subunits of the MCM complex. Required for sister chromatid cohesion. The sequence is that of Mini-chromosome maintenance complex-binding protein (MCMBP) from Homo sapiens (Human).